The chain runs to 391 residues: 3-ketoacyl-CoA thiolase (391 aa).

Catalysis depends on Cys95, which acts as the Acyl-thioester intermediate. Residues His347 and Cys377 each act as proton acceptor in the active site.

The protein belongs to the thiolase-like superfamily. Thiolase family. As to quaternary structure, heterotetramer of two alpha chains (FadB) and two beta chains (FadA).

It localises to the cytoplasm. It carries out the reaction an acyl-CoA + acetyl-CoA = a 3-oxoacyl-CoA + CoA. It functions in the pathway lipid metabolism; fatty acid beta-oxidation. Its function is as follows. Catalyzes the final step of fatty acid oxidation in which acetyl-CoA is released and the CoA ester of a fatty acid two carbons shorter is formed. This Pseudomonas putida (strain ATCC 700007 / DSM 6899 / JCM 31910 / BCRC 17059 / LMG 24140 / F1) protein is 3-ketoacyl-CoA thiolase.